We begin with the raw amino-acid sequence, 389 residues long: Succinate--CoA ligase [ADP-forming] subunit beta (389 aa).

The ATP-grasp domain maps to 9–244; sequence KELLRQFNVP…IDEEDAAEIE (236 aa). Residues Lys-46, 53-55, Glu-99, Ala-102, and Glu-107 each bind ATP; that span reads GRG. The Mg(2+) site is built by Asn-199 and Asp-213. Substrate is bound by residues Asn-264 and 321–323; that span reads GIM.

It belongs to the succinate/malate CoA ligase beta subunit family. As to quaternary structure, heterotetramer of two alpha and two beta subunits. Mg(2+) is required as a cofactor.

The catalysed reaction is succinate + ATP + CoA = succinyl-CoA + ADP + phosphate. It catalyses the reaction GTP + succinate + CoA = succinyl-CoA + GDP + phosphate. It participates in carbohydrate metabolism; tricarboxylic acid cycle; succinate from succinyl-CoA (ligase route): step 1/1. Its function is as follows. Succinyl-CoA synthetase functions in the citric acid cycle (TCA), coupling the hydrolysis of succinyl-CoA to the synthesis of either ATP or GTP and thus represents the only step of substrate-level phosphorylation in the TCA. The beta subunit provides nucleotide specificity of the enzyme and binds the substrate succinate, while the binding sites for coenzyme A and phosphate are found in the alpha subunit. In Polynucleobacter asymbioticus (strain DSM 18221 / CIP 109841 / QLW-P1DMWA-1) (Polynucleobacter necessarius subsp. asymbioticus), this protein is Succinate--CoA ligase [ADP-forming] subunit beta.